The following is a 442-amino-acid chain: Glutamate--tRNA ligase 1 (442 aa).

A 'HIGH' region motif is present at residues 9–19; it reads PSPTGKLHVGN. The 'KMSKS' region motif lies at 240 to 244; sequence KLSKR. Lys-243 serves as a coordination point for ATP.

This sequence belongs to the class-I aminoacyl-tRNA synthetase family. Glutamate--tRNA ligase type 1 subfamily. Monomer.

It localises to the cytoplasm. The enzyme catalyses tRNA(Glu) + L-glutamate + ATP = L-glutamyl-tRNA(Glu) + AMP + diphosphate. In terms of biological role, catalyzes the attachment of glutamate to tRNA(Glu) in a two-step reaction: glutamate is first activated by ATP to form Glu-AMP and then transferred to the acceptor end of tRNA(Glu). The polypeptide is Glutamate--tRNA ligase 1 (Novosphingobium aromaticivorans (strain ATCC 700278 / DSM 12444 / CCUG 56034 / CIP 105152 / NBRC 16084 / F199)).